Here is a 248-residue protein sequence, read N- to C-terminus: ATP synthase subunit a (248 aa).

The next 6 helical transmembrane spans lie at 34 to 54 (TNVTLWMALAVAAIALLLVAG), 91 to 111 (YFPYIFTLFMFILVANFLGLI), 121 to 141 (IAVTAVLALAVFITVTVIGFV), 147 to 167 (FLSLFWVASAPLALRPILAVI), 197 to 217 (FAGFAQVAAVAPIAIIGVMAI), and 220 to 240 (LEVLVSAIQAYVFTILTCVYL).

Belongs to the ATPase A chain family. F-type ATPases have 2 components, CF(1) - the catalytic core - and CF(0) - the membrane proton channel. CF(1) has five subunits: alpha(3), beta(3), gamma(1), delta(1), epsilon(1). CF(0) has four main subunits: a, b, b' and c.

It is found in the cell inner membrane. Key component of the proton channel; it plays a direct role in the translocation of protons across the membrane. The polypeptide is ATP synthase subunit a (Dinoroseobacter shibae (strain DSM 16493 / NCIMB 14021 / DFL 12)).